Reading from the N-terminus, the 880-residue chain is Tyrosine-protein kinase receptor TYRO3 (880 aa).

Residues 1-30 (MALRRSMGWPGLRPLLLAGLASLLLPGSAA) form the signal peptide. Ig-like C2-type domains are found at residues 31–118 (AGLK…TKIS) and 129–209 (PFFT…PAIV). Residues 31-419 (AGLKLMGAPV…QGPPHSRTSW (389 aa)) are Extracellular-facing. N-linked (GlcNAc...) asparagine glycosylation is found at Asn-53, Asn-75, Asn-181, Asn-220, Asn-230, Asn-283, Asn-356, and Asn-370. 2 disulfide bridges follow: Cys-54–Cys-107 and Cys-150–Cys-193. 2 consecutive Fibronectin type-III domains span residues 217-310 (APFN…TKGL) and 315-406 (APQN…SHDH). The chain crosses the membrane as a helical span at residues 420–440 (VPVVLGVLTALITAAALALIL). Residues 441–880 (LRKRRKETRF…QQGLLPHSSC (440 aa)) are Cytoplasmic-facing. At Ser-456 the chain carries Phosphoserine. A Protein kinase domain is found at 508–785 (FTLGRMLGKG…LENILGHLSV (278 aa)). Residues 514–522 (LGKGEFGSV) and Lys-540 each bind ATP. The active-site Proton acceptor is Asp-645. Phosphotyrosine; by autocatalysis is present on residues Tyr-671, Tyr-675, Tyr-676, and Tyr-794. The tract at residues 800–864 (AEQPTESGSP…QQPESPLNEN (65 aa)) is disordered. Ser-808 and Ser-859 each carry phosphoserine. The span at 849–864 (SPGQLEQQPESPLNEN) shows a compositional bias: polar residues.

The protein belongs to the protein kinase superfamily. Tyr protein kinase family. AXL/UFO subfamily. In terms of assembly, monomer and homodimer. Interacts (via N-terminus) with extracellular ligands TULP1 and GAS6. Interacts with PIK3R1; this interaction increases PI3-kinase activity. In terms of processing, autophosphorylated. Abundant in the brain and lower levels in other tissues.

It is found in the cell membrane. It carries out the reaction L-tyrosyl-[protein] + ATP = O-phospho-L-tyrosyl-[protein] + ADP + H(+). In terms of biological role, receptor tyrosine kinase that transduces signals from the extracellular matrix into the cytoplasm by binding to several ligands including TULP1 or GAS6. Regulates many physiological processes including cell survival, migration and differentiation. Ligand binding at the cell surface induces dimerization and autophosphorylation of TYRO3 on its intracellular domain that provides docking sites for downstream signaling molecules. Following activation by ligand, interacts with PIK3R1 and thereby enhances PI3-kinase activity. Activates the AKT survival pathway, including nuclear translocation of NF-kappa-B and up-regulation of transcription of NF-kappa-B-regulated genes. TYRO3 signaling plays a role in various processes such as neuron protection from excitotoxic injury, platelet aggregation and cytoskeleton reorganization. Also plays an important role in inhibition of Toll-like receptors (TLRs)-mediated innate immune response by activating STAT1, which selectively induces production of suppressors of cytokine signaling SOCS1 and SOCS3. The polypeptide is Tyrosine-protein kinase receptor TYRO3 (Tyro3) (Mus musculus (Mouse)).